The primary structure comprises 267 residues: Putative transcription factor Ovo-like 1 (267 aa).

4 consecutive C2H2-type zinc fingers follow at residues 118-140 (FTCRVCQKAFTYQRMLNRHMKCH), 146-168 (HLCTYCGKGFNDTFDLKRHVRTH), 174-197 (YKCSLCDKAFTQRCSLESHLKKIH), and 213-235 (YVCEECGCTSESQEGHVLHLKEH).

Expressed in fetal kidney, and also in adult pancreas and placenta. Not expressed in intestine, peripheral blood lymphocytes and ovary.

The protein localises to the nucleus. Functionally, putative transcription factor. Involved in hair formation and spermatogenesis. May function in the differentiation and/or maintenance of the urogenital system. The chain is Putative transcription factor Ovo-like 1 (OVOL1) from Homo sapiens (Human).